A 168-amino-acid chain; its full sequence is Ribulose bisphosphate carboxylase small subunit, chloroplastic (168 aa).

Residues 1 to 28 constitute a chloroplast transit peptide; sequence MASIAAKSVSLRAATRRAAPVAAPADAR.

It belongs to the RuBisCO small chain family. As to quaternary structure, heterohexadecamer of 8 large and 8 small subunits.

The protein localises to the plastid. Its subcellular location is the chloroplast. Its function is as follows. RuBisCO catalyzes two reactions: the carboxylation of D-ribulose 1,5-bisphosphate, the primary event in carbon dioxide fixation, as well as the oxidative fragmentation of the pentose substrate. Both reactions occur simultaneously and in competition at the same active site. Although the small subunit is not catalytic it is essential for maximal activity. The polypeptide is Ribulose bisphosphate carboxylase small subunit, chloroplastic (Chlamydomonas moewusii (Chlamydomonas eugametos)).